We begin with the raw amino-acid sequence, 70 residues long: Large ribosomal subunit protein uL29 (70 aa).

The protein belongs to the universal ribosomal protein uL29 family.

This chain is Large ribosomal subunit protein uL29, found in Thermosynechococcus vestitus (strain NIES-2133 / IAM M-273 / BP-1).